An 88-amino-acid chain; its full sequence is Alkene monooxygenase system, oxygenase component subunit gamma (88 aa).

The protein belongs to the TmoB/XamoB family. As to quaternary structure, the alkene monooxygenase multicomponent enzyme system is composed of an electron transfer component and a monooxygenase component interacting with the effector protein XamoD. The electron transfer component is composed of a ferredoxin reductase (XamoF) and a ferredoxin (XamoC), and the monooxygenase component is formed by a heterohexamer (dimer of heterotrimers) of two alpha subunits (XamoA), two beta subunits (XamoE) and two gamma subunits (XamoB).

It is found in the cytoplasm. The enzyme catalyses propene + NADH + O2 + H(+) = 1,2-epoxypropane + NAD(+) + H2O. Its activity is regulated as follows. Inhibited by propyne. Component of the alkene monooxygenase multicomponent enzyme system which catalyzes the O2- and NADH-dependent epoxidation of short chain (C2 to C6) alkenes to their corresponding epoxides. Also able to catalyze the oxidation of a number of chlorinated alkenes, including trichloroethylene, cis- and trans-1,2-dichloroethylene, vinyl chloride, 1-chloropropylene, 1,3-dichloropropylene and 2,3-dichloropropylene. This Xanthobacter autotrophicus (strain ATCC BAA-1158 / Py2) protein is Alkene monooxygenase system, oxygenase component subunit gamma.